Consider the following 1080-residue polypeptide: ATP-dependent helicase/deoxyribonuclease subunit B (1080 aa).

The protein belongs to the helicase family. AddB/RexB type 2 subfamily. In terms of assembly, heterodimer of AddA and RexB. It depends on Mg(2+) as a cofactor.

Functionally, the heterodimer acts as both an ATP-dependent DNA helicase and an ATP-dependent, dual-direction single-stranded exonuclease. Recognizes the chi site generating a DNA molecule suitable for the initiation of homologous recombination. This subunit has 5' -&gt; 3' nuclease activity but not helicase activity. The polypeptide is ATP-dependent helicase/deoxyribonuclease subunit B (Streptococcus mutans serotype c (strain ATCC 700610 / UA159)).